We begin with the raw amino-acid sequence, 227 residues long: ATP-dependent dethiobiotin synthetase BioD (227 aa).

13–18 serves as a coordination point for ATP; the sequence is NIGKTV. Residue Thr-17 coordinates Mg(2+). Lys-38 is an active-site residue. ATP contacts are provided by residues Asp-55 and 116–119; that span reads EGIG. Mg(2+)-binding residues include Asp-55 and Glu-116.

This sequence belongs to the dethiobiotin synthetase family. Homodimer. Mg(2+) serves as cofactor.

It localises to the cytoplasm. The enzyme catalyses (7R,8S)-7,8-diammoniononanoate + CO2 + ATP = (4R,5S)-dethiobiotin + ADP + phosphate + 3 H(+). It participates in cofactor biosynthesis; biotin biosynthesis; biotin from 7,8-diaminononanoate: step 1/2. Its function is as follows. Catalyzes a mechanistically unusual reaction, the ATP-dependent insertion of CO2 between the N7 and N8 nitrogen atoms of 7,8-diaminopelargonic acid (DAPA, also called 7,8-diammoniononanoate) to form a ureido ring. The polypeptide is ATP-dependent dethiobiotin synthetase BioD (Buchnera aphidicola subsp. Baizongia pistaciae (strain Bp)).